A 434-amino-acid polypeptide reads, in one-letter code: ATP-dependent protease ATPase subunit HslU (434 aa).

ATP-binding positions include I18, 60 to 65, D247, E312, and R384; that span reads GVGKTE.

The protein belongs to the ClpX chaperone family. HslU subfamily. In terms of assembly, a double ring-shaped homohexamer of HslV is capped on each side by a ring-shaped HslU homohexamer. The assembly of the HslU/HslV complex is dependent on binding of ATP.

Its subcellular location is the cytoplasm. ATPase subunit of a proteasome-like degradation complex; this subunit has chaperone activity. The binding of ATP and its subsequent hydrolysis by HslU are essential for unfolding of protein substrates subsequently hydrolyzed by HslV. HslU recognizes the N-terminal part of its protein substrates and unfolds these before they are guided to HslV for hydrolysis. In Brucella suis (strain ATCC 23445 / NCTC 10510), this protein is ATP-dependent protease ATPase subunit HslU.